A 443-amino-acid polypeptide reads, in one-letter code: Probable glucomannan 4-beta-mannosyltransferase 11 (443 aa).

Aspartate 52 is an active-site residue. The substrate site is built by aspartate 111 and aspartate 113. Aspartate 205 is an active-site residue. 4 helical membrane passes run 284 to 304 (IIVH…SVFF), 321 to 341 (ITLF…FWVL), 400 to 420 (EMMV…FGKT), and 421 to 441 (VLYI…IGFI).

Belongs to the glycosyltransferase 2 family. Plant cellulose synthase-like A subfamily.

It is found in the golgi apparatus membrane. It carries out the reaction GDP-mannose + (glucomannan)n = GDP + (glucomannan)n+1.. Functionally, probable mannan synthase which consists of a 4-beta-mannosyltransferase activity on mannan using GDP-mannose. The beta-1,4-mannan product is the backbone for galactomannan synthesis by galactomannan galactosyltransferase. Galactomannan is a noncellulosic polysaccharides of plant cell wall. The polypeptide is Probable glucomannan 4-beta-mannosyltransferase 11 (Arabidopsis thaliana (Mouse-ear cress)).